Consider the following 455-residue polypeptide: Argininosuccinate lyase (455 aa).

This sequence belongs to the lyase 1 family. Argininosuccinate lyase subfamily.

Its subcellular location is the cytoplasm. The catalysed reaction is 2-(N(omega)-L-arginino)succinate = fumarate + L-arginine. The protein operates within amino-acid biosynthesis; L-arginine biosynthesis; L-arginine from L-ornithine and carbamoyl phosphate: step 3/3. The polypeptide is Argininosuccinate lyase (Shewanella oneidensis (strain ATCC 700550 / JCM 31522 / CIP 106686 / LMG 19005 / NCIMB 14063 / MR-1)).